Reading from the N-terminus, the 168-residue chain is Leukotoxin-activating lysine-acyltransferase LtxC (168 aa).

Active-site residues include H23 and D92.

Belongs to the RTX toxin acyltransferase family.

The protein resides in the cytoplasm. The catalysed reaction is a fatty acyl-[ACP] + L-lysyl-[protein] = N(6)-(fatty acyl)-L-lysyl-[protein] + holo-[ACP] + H(+). Its function is as follows. Required for full activity and modification of the LtxA leukotoxin. Involved in fatty acid modification of the protoxin at two internal lysine residues, thereby converting it to the active toxin. The protein is Leukotoxin-activating lysine-acyltransferase LtxC of Aggregatibacter actinomycetemcomitans (Actinobacillus actinomycetemcomitans).